The chain runs to 187 residues: Troponin I, slow skeletal muscle (187 aa).

N-acetylproline is present on Pro2. The segment at 2–48 is involved in binding TNC; sequence PEVERKSKITASRKLMLKSLMLAKAKECWEQEHEEREAEKVRYLSER. Ser58 carries the phosphoserine modification. Residues 97 to 118 are involved in binding TNC and actin; that stretch reads LKLKVLDLRGKFKRPPLRRVRV.

Belongs to the troponin I family. In terms of assembly, binds to actin and tropomyosin.

Troponin I is the inhibitory subunit of troponin, the thin filament regulatory complex which confers calcium-sensitivity to striated muscle actomyosin ATPase activity. In Mus musculus (Mouse), this protein is Troponin I, slow skeletal muscle (Tnni1).